Here is a 397-residue protein sequence, read N- to C-terminus: Elongation factor Tu (397 aa).

One can recognise a tr-type G domain in the interval 10 to 206 (KPHVNIGTIG…AVDSYIPTPE (197 aa)). The tract at residues 19-26 (GHVDHGKT) is G1. GTP is bound at residue 19–26 (GHVDHGKT). T26 serves as a coordination point for Mg(2+). The tract at residues 60-64 (GITIN) is G2. The segment at 81-84 (DCPG) is G3. Residues 81-85 (DCPGH) and 136-139 (NKAD) each bind GTP. The segment at 136–139 (NKAD) is G4. The G5 stretch occupies residues 174 to 176 (SAL).

This sequence belongs to the TRAFAC class translation factor GTPase superfamily. Classic translation factor GTPase family. EF-Tu/EF-1A subfamily. Monomer.

The protein resides in the cytoplasm. It carries out the reaction GTP + H2O = GDP + phosphate + H(+). GTP hydrolase that promotes the GTP-dependent binding of aminoacyl-tRNA to the A-site of ribosomes during protein biosynthesis. The sequence is that of Elongation factor Tu from Clostridium beijerinckii (strain ATCC 51743 / NCIMB 8052) (Clostridium acetobutylicum).